A 491-amino-acid chain; its full sequence is Keratin, type I cytoskeletal 39 (491 aa).

Residues M1 to E96 are head. The region spanning E96–R407 is the IF rod domain. A coil 1A region spans residues K97 to E131. The segment at S132–D142 is linker 1. The interval Y143–C243 is coil 1B. Residues Q244–A259 form a linker 12 region. The tract at residues D260–S403 is coil 2. The tract at residues D404–V491 is tail.

The protein belongs to the intermediate filament family. In terms of assembly, heterotetramer of two type I and two type II keratins. In terms of tissue distribution, expressed in skin and scalp. In the hair follicle, it is present in the upper hair cuticle and the upper cortex. Also present in the in the upper portion of beard hairs (at protein level).

Its function is as follows. May play a role in late hair differentiation. The polypeptide is Keratin, type I cytoskeletal 39 (KRT39) (Homo sapiens (Human)).